The sequence spans 644 residues: Chaperone protein DnaK (644 aa).

Thr-200 bears the Phosphothreonine; by autocatalysis mark. The tract at residues Val-603–Lys-644 is disordered. The span at Gly-612–Ala-630 shows a compositional bias: low complexity. A compositionally biased stretch (basic and acidic residues) spans Ala-635–Lys-644.

This sequence belongs to the heat shock protein 70 family.

Its function is as follows. Acts as a chaperone. This Polynucleobacter asymbioticus (strain DSM 18221 / CIP 109841 / QLW-P1DMWA-1) (Polynucleobacter necessarius subsp. asymbioticus) protein is Chaperone protein DnaK.